The sequence spans 1704 residues: ABC transporter ced-7 (1704 aa).

Residues 23–43 traverse the membrane as a helical segment; the sequence is VWTLFELIIPCLLLGPLVYLV. N-linked (GlcNAc...) asparagine glycans are attached at residues Asn126 and Asn145. The next 3 helical transmembrane spans lie at 256–276, 306–326, and 334–354; these read AFIDFFPFIWAFVTFINVIHI, VVMAFLKFFVIFLCSIIPLTF, and AALIVTVLMYGLGAVIFGAFV. Residue Asn359 is glycosylated (N-linked (GlcNAc...) asparagine). Transmembrane regions (helical) follow at residues 362 to 382 and 389 to 409; these read NSAIKAILVAWGAMIGISYKL and ISSCFLYGLNINGAFALAVEA. N-linked (GlcNAc...) asparagine glycosylation is found at Asn421 and Asn427. A helical transmembrane segment spans residues 436–456; that stretch reads GWALVMMIVDILWMSIGALVV. A glycan (N-linked (GlcNAc...) asparagine) is linked at Asn481. The interval 511–536 is disordered; the sequence is NPMASTSLNPPNADSDSLLEGSTEAD. The segment covering 512-525 has biased composition (polar residues); that stretch reads PMASTSLNPPNADS. The region spanning 546–777 is the ABC transporter 1 domain; that stretch reads IIVRNLVKIW…FGTGYLLTVV (232 aa). An ATP-binding site is contributed by 580–587; the sequence is GHNGAGKS. Asn678, Asn727, and Asn899 each carry an N-linked (GlcNAc...) asparagine glycan. Polar residues-rich tracts occupy residues 888–902 and 911–921; these read RQNSRISHNSRNASE and DTQSSTKSADS. The segment at 888–933 is disordered; it reads RQNSRISHNSRNASEPSLKPAGYDTQSSTKSADSYQKLMDSQARGP. The chain crosses the membrane as a helical span at residues 963–983; that stretch reads LFTQVLIPIILLGLVGSLTTL. Asn986, Asn1012, and Asn1045 each carry an N-linked (GlcNAc...) asparagine glycan. Transmembrane regions (helical) follow at residues 1126 to 1146, 1153 to 1173, 1176 to 1196, 1201 to 1221, 1234 to 1254, 1266 to 1286, and 1311 to 1331; these read LAPMLILIFAMVTSTFVMFLI, FAHQQFLTGISPITFYSASLI, GILYSLICLIFLFMFLAFHWM, AIVILFWFLYFFSSVPFIYAV, LLIIWQVVISGAALLAVFLIF, ILVNIFMFLLPSYAFGSAIIT, and LMGTFGVCSFALFVLLQFKFV. One can recognise an ABC transporter 2 domain in the interval 1379–1603; that stretch reads LVIKDLTKTF…YGNNYTMTLS (225 aa). 1411–1418 contributes to the ATP binding site; it reads GVNGAGKT. Asn1597 and Asn1632 each carry an N-linked (GlcNAc...) asparagine glycan.

Belongs to the ABC transporter superfamily. ABCA family. Ubiquitous in embryos. Expressed in larval germline precursors. Expression in larvae and adults is seen in amphid sheath cells, pharyngeal-intestinal valve and phasmid sheath cells. Low levels of expression are also seen in gonadal sheath cells.

The protein localises to the membrane. In terms of biological role, functions in the engulfment of cell corpses during embryonic programmed cell death to translocate molecules that mediate homotypic adhesion between cell surfaces of the dying and engulfing cells. In Caenorhabditis elegans, this protein is ABC transporter ced-7 (ced-7).